Reading from the N-terminus, the 665-residue chain is UvrABC system protein B (665 aa).

The Helicase ATP-binding domain occupies 25 to 178 (ASLQAEHRFQ…RQLLRDLTTI (154 aa)). 38-45 (GATGTGKT) is a binding site for ATP. Positions 91–114 (YYDYYQPEAYIPVTDTYIEKTAAI) match the Beta-hairpin motif. A Helicase C-terminal domain is found at 429–595 (QVDDLLGEVR…PIVKKASNAI (167 aa)). Residues 626–661 (PELITQLEAQMKEAAKKLEFEEAAKYRDRIKQLRDK) form the UVR domain.

Belongs to the UvrB family. As to quaternary structure, forms a heterotetramer with UvrA during the search for lesions. Interacts with UvrC in an incision complex.

The protein resides in the cytoplasm. The UvrABC repair system catalyzes the recognition and processing of DNA lesions. A damage recognition complex composed of 2 UvrA and 2 UvrB subunits scans DNA for abnormalities. Upon binding of the UvrA(2)B(2) complex to a putative damaged site, the DNA wraps around one UvrB monomer. DNA wrap is dependent on ATP binding by UvrB and probably causes local melting of the DNA helix, facilitating insertion of UvrB beta-hairpin between the DNA strands. Then UvrB probes one DNA strand for the presence of a lesion. If a lesion is found the UvrA subunits dissociate and the UvrB-DNA preincision complex is formed. This complex is subsequently bound by UvrC and the second UvrB is released. If no lesion is found, the DNA wraps around the other UvrB subunit that will check the other stand for damage. The chain is UvrABC system protein B from Cyanothece sp. (strain PCC 7425 / ATCC 29141).